A 142-amino-acid polypeptide reads, in one-letter code: Hemoglobin subunit beta-1 (142 aa).

Residues 2–142 (SLTDEEIRLI…VTEALSCQYH (141 aa)) enclose the Globin domain. Heme b is bound by residues histidine 59 and histidine 88.

The protein belongs to the globin family. Heterotetramer of two alpha chains and two beta chains. Red blood cells.

Functionally, involved in oxygen transport from the lung to the various peripheral tissues. The protein is Hemoglobin subunit beta-1 (HBB1) of Torpedo marmorata (Marbled electric ray).